The chain runs to 354 residues: Cysteine proteinase A (354 aa).

The first 24 residues, M1 to A24, serve as a signal peptide directing secretion. The propeptide at L25–S125 is activation peptide. Disulfide bonds link C150–C191, C184–C229, and C282–C330. C153 is a catalytic residue. N-linked (GlcNAc...) asparagine glycosylation is present at N208. Residues H289 and N309 contribute to the active site.

It belongs to the peptidase C1 family.

The polypeptide is Cysteine proteinase A (LMCPA) (Leishmania mexicana).